The primary structure comprises 144 residues: Putative pre-16S rRNA nuclease (144 aa).

This sequence belongs to the YqgF nuclease family.

Its subcellular location is the cytoplasm. In terms of biological role, could be a nuclease involved in processing of the 5'-end of pre-16S rRNA. The chain is Putative pre-16S rRNA nuclease from Chlorobium phaeobacteroides (strain BS1).